A 324-amino-acid polypeptide reads, in one-letter code: tRNA dimethylallyltransferase (324 aa).

17–24 (GPTASGKT) is an ATP binding site. 19–24 (TASGKT) serves as a coordination point for substrate. 4 interaction with substrate tRNA regions span residues 42–45 (DSAL), 166–170 (QRIQR), 251–256 (RCVGYR), and 284–291 (KRQITWLR).

The protein belongs to the IPP transferase family. Monomer. Mg(2+) is required as a cofactor.

It carries out the reaction adenosine(37) in tRNA + dimethylallyl diphosphate = N(6)-dimethylallyladenosine(37) in tRNA + diphosphate. Catalyzes the transfer of a dimethylallyl group onto the adenine at position 37 in tRNAs that read codons beginning with uridine, leading to the formation of N6-(dimethylallyl)adenosine (i(6)A). In Burkholderia ambifaria (strain MC40-6), this protein is tRNA dimethylallyltransferase.